The following is a 109-amino-acid chain: METRAIVRGVRLSVDKGRPVADLVRGKKVDQALNILEFTQKKAAVIIKKALESAIANAEHNDGADIDELKVKTIHVEQGATLKRFSARAKGRGNRISKPTCHIFVTVGN.

This sequence belongs to the universal ribosomal protein uL22 family. As to quaternary structure, part of the 50S ribosomal subunit.

Functionally, this protein binds specifically to 23S rRNA; its binding is stimulated by other ribosomal proteins, e.g. L4, L17, and L20. It is important during the early stages of 50S assembly. It makes multiple contacts with different domains of the 23S rRNA in the assembled 50S subunit and ribosome. The globular domain of the protein is located near the polypeptide exit tunnel on the outside of the subunit, while an extended beta-hairpin is found that lines the wall of the exit tunnel in the center of the 70S ribosome. In Methylibium petroleiphilum (strain ATCC BAA-1232 / LMG 22953 / PM1), this protein is Large ribosomal subunit protein uL22.